The sequence spans 216 residues: uncharacterized protein (216 aa).

Residues 7 to 29 (ILVIFFLIFFIGFEFSDMTLAFI) traverse the membrane as a helical segment.

It is found in the membrane. This is an uncharacterized protein from Archaeoglobus fulgidus (strain ATCC 49558 / DSM 4304 / JCM 9628 / NBRC 100126 / VC-16).